Reading from the N-terminus, the 305-residue chain is 4-hydroxy-tetrahydrodipicolinate synthase 1 (305 aa).

Position 53 (threonine 53) interacts with pyruvate. Tyrosine 141 serves as the catalytic Proton donor/acceptor. Residue lysine 169 is the Schiff-base intermediate with substrate of the active site. Valine 209 contacts pyruvate.

Belongs to the DapA family. In terms of assembly, homotetramer; dimer of dimers.

Its subcellular location is the cytoplasm. The enzyme catalyses L-aspartate 4-semialdehyde + pyruvate = (2S,4S)-4-hydroxy-2,3,4,5-tetrahydrodipicolinate + H2O + H(+). Its pathway is amino-acid biosynthesis; L-lysine biosynthesis via DAP pathway; (S)-tetrahydrodipicolinate from L-aspartate: step 3/4. Catalyzes the condensation of (S)-aspartate-beta-semialdehyde [(S)-ASA] and pyruvate to 4-hydroxy-tetrahydrodipicolinate (HTPA). This Streptomyces coelicolor (strain ATCC BAA-471 / A3(2) / M145) protein is 4-hydroxy-tetrahydrodipicolinate synthase 1.